The chain runs to 872 residues: Metabotropic glutamate receptor 2 (872 aa).

Residues 1–18 form the signal peptide; the sequence is MGSLLALLALLLLWGAVA. The Extracellular portion of the chain corresponds to 19-567; it reads EGPAKKVLTL…QEYIRWGDAW (549 aa). Cysteines 50 and 92 form a disulfide. L-glutamate is bound by residues Arg57, Arg61, Ser145, Ala166, and Thr168. 2 N-linked (GlcNAc...) asparagine glycosylation sites follow: Asn203 and Asn286. Cystine bridges form between Cys234-Cys518, Cys355-Cys362, Cys400-Cys407, Cys500-Cys519, Cys504-Cys522, Cys525-Cys537, and Cys540-Cys553. Residue Asp295 participates in L-glutamate binding. A glycan (N-linked (GlcNAc...) asparagine) is linked at Asn338. L-glutamate is bound at residue Lys377. N-linked (GlcNAc...) asparagine glycosylation is present at Asn402. An N-linked (GlcNAc...) asparagine glycan is attached at Asn547. Residues 568–590 form a helical membrane-spanning segment; that stretch reads AVGPVTIACLGALATLFVLGVFV. Over 591–604 the chain is Cytoplasmic; it reads RHNATPVVKASGRE. The helical transmembrane segment at 605–625 threads the bilayer; it reads LCYILLGGVFLCYCMTFIFIA. At 626–636 the chain is on the extracellular side; the sequence is KPSTAVCTLRR. Residues Cys632 and Cys721 are joined by a disulfide bond. The chain crosses the membrane as a helical span at residues 637–655; sequence LGLGTAFSVCYSALLTKTN. The Cytoplasmic segment spans residues 656 to 679; sequence RIARIFGGAREGAQRPRFISPASQ. The interval 677-685 is important for interaction with HTR2A; the sequence is ASQVAICLA. Residues 680–700 traverse the membrane as a helical segment; it reads VAICLALISGQLLIVVAWLVV. The Extracellular segment spans residues 701–725; the sequence is EAPGTGKETAPERREVVTLRCNHRD. Residues 726 to 747 form a helical membrane-spanning segment; that stretch reads ASMLGSLAYNVLLIALCTLYAF. Residues 748–760 are Cytoplasmic-facing; it reads KTRKCPENFNEAK. A helical transmembrane segment spans residues 761–783; it reads FIGFTMYTTCIIWLAFLPIFYVT. Residues 784-793 are Extracellular-facing; it reads SSDYRVQTTT. Residues 794-819 form a helical membrane-spanning segment; sequence MCVSVSLSGSVVLGCLFAPKLHIILF. The Cytoplasmic portion of the chain corresponds to 820–872; the sequence is QPQKNVVSHRAPTSRFGSAAARASSSLGQGSGSQFVPTVCNGREVVDSTTSSL.

It belongs to the G-protein coupled receptor 3 family. In terms of assembly, forms heterodimers with GRM3 or GRM4. Interacts with TAMALIN. Interacts with HTR2A. (Microbial infection) Interacts with H5N6 virus protein HA. As to quaternary structure, (Microbial infection) Interacts with rabies virus protein G. In terms of assembly, (Microbial infection) Interacts with SARS-CoV-2 virus spike protein S. In terms of tissue distribution, detected in brain cortex (at protein level). Widely expressed in different regions of the adult brain as well as in fetal brain.

The protein resides in the cell membrane. It is found in the synapse. Its subcellular location is the cell projection. It localises to the dendrite. Dimeric G protein-coupled receptor which is activated by the excitatory neurotransmitter L-glutamate. Plays critical roles in modulating synaptic transmission and neuronal excitability. Upon activation by glutamate, inhibits presynaptic calcium channels, reducing further glutamate release and dampening excitatory signaling. Mechanistically, ligand binding causes a conformation change that triggers signaling via guanine nucleotide-binding proteins (G proteins) and modulates the activity of down-stream effectors, such as adenylate cyclase. May mediate suppression of neurotransmission or may be involved in synaptogenesis or synaptic stabilization. In terms of biological role, (Microbial infection) Plays an important role in influenza virus internalization. Its function is as follows. (Microbial infection) Acts as a host entry factor for rabies virus that hijacks the endocytosis of GRM2 to enter cells. Functionally, (Microbial infection) Acts as a host entry factor for SARS-CoV-2 that hijacks the endocytosis of GRM2 to enter cells. The protein is Metabotropic glutamate receptor 2 of Homo sapiens (Human).